The sequence spans 701 residues: Ribosomal RNA large subunit methyltransferase K/L (701 aa).

In terms of domain architecture, THUMP spans 43-154; the sequence is LLYQSLMWSR…KETAHISLDL (112 aa).

This sequence belongs to the methyltransferase superfamily. RlmKL family.

It is found in the cytoplasm. It catalyses the reaction guanosine(2445) in 23S rRNA + S-adenosyl-L-methionine = N(2)-methylguanosine(2445) in 23S rRNA + S-adenosyl-L-homocysteine + H(+). It carries out the reaction guanosine(2069) in 23S rRNA + S-adenosyl-L-methionine = N(2)-methylguanosine(2069) in 23S rRNA + S-adenosyl-L-homocysteine + H(+). Its function is as follows. Specifically methylates the guanine in position 2445 (m2G2445) and the guanine in position 2069 (m7G2069) of 23S rRNA. The protein is Ribosomal RNA large subunit methyltransferase K/L of Klebsiella pneumoniae (strain 342).